The primary structure comprises 333 residues: Cysteine protease (333 aa).

Residues 1–18 form the signal peptide; the sequence is MKFLLVAALCALVAIGSC. The propeptide at 19 to 108 is activation peptide; that stretch reads KPTREEIKTF…MEAAKEPLIN (90 aa). The N-linked (GlcNAc...) asparagine glycan is linked to N93. Intrachain disulfides connect C134/C182 and C168/C214. C137 is an active-site residue. Active-site residues include H281 and N301.

This sequence belongs to the peptidase C1 family. In terms of assembly, homodimer.

In terms of biological role, cysteine protease. In Blomia tropicalis (Mite), this protein is Cysteine protease.